The chain runs to 697 residues: Glycine--tRNA ligase beta subunit (697 aa).

The protein belongs to the class-II aminoacyl-tRNA synthetase family. Tetramer of two alpha and two beta subunits.

The protein localises to the cytoplasm. It catalyses the reaction tRNA(Gly) + glycine + ATP = glycyl-tRNA(Gly) + AMP + diphosphate. This chain is Glycine--tRNA ligase beta subunit, found in Cereibacter sphaeroides (strain ATCC 17029 / ATH 2.4.9) (Rhodobacter sphaeroides).